The sequence spans 88 residues: Small ribosomal subunit protein uS15 (88 aa).

It belongs to the universal ribosomal protein uS15 family. In terms of assembly, part of the 30S ribosomal subunit. Forms a bridge to the 50S subunit in the 70S ribosome, contacting the 23S rRNA.

One of the primary rRNA binding proteins, it binds directly to 16S rRNA where it helps nucleate assembly of the platform of the 30S subunit by binding and bridging several RNA helices of the 16S rRNA. Its function is as follows. Forms an intersubunit bridge (bridge B4) with the 23S rRNA of the 50S subunit in the ribosome. In Desulfitobacterium hafniense (strain Y51), this protein is Small ribosomal subunit protein uS15.